We begin with the raw amino-acid sequence, 107 residues long: uncharacterized protein (107 aa).

The Glutaredoxin domain maps to lysine 6 to alanine 107. Residue lysine 23 coordinates glutathione. Cysteine 31 is a binding site for [2Fe-2S] cluster. Residues arginine 60 and alanine 85–aspartate 86 contribute to the glutathione site.

It belongs to the glutaredoxin family. Monothiol subfamily.

It localises to the plastid. The protein localises to the chloroplast. This is an uncharacterized protein from Porphyra purpurea (Red seaweed).